The chain runs to 180 residues: Secreted RxLR effector protein 5 (180 aa).

A signal peptide spans 1 to 24; that stretch reads MRFYYTLLATAAALLVHSDALSAA. The RxLR-dEER signature appears at 44-60; sequence RFLRRHTDSETTDNEER.

This sequence belongs to the RxLR effector family.

The protein localises to the secreted. It localises to the host cell. Its function is as follows. Secreted effector that partially suppresses elicitor-induced cell death in host and enhances virulence of P.parasitica. In Phytophthora nicotianae (Potato buckeye rot agent), this protein is Secreted RxLR effector protein 5.